The primary structure comprises 664 residues: Protein fem-1 homolog CG6966 (664 aa).

6 ANK repeats span residues 40-70 (NGAT…NVEQ), 82-111 (EDAP…NVNS), 115-144 (TNST…DFEV), 148-177 (HGHT…DVNR), 181-210 (KGNT…TMDV), and 213-242 (YGMT…VSRE). TPR repeat units lie at residues 245 to 279 (IHAL…RAVE) and 335 to 368 (SYYI…QQKI). The interval 433–460 (QQKDQQHPQKQLPAADKSPSCSASSSAS) is disordered. Residues 450–460 (SPSCSASSSAS) show a composition bias toward low complexity. ANK repeat units follow at residues 529 to 571 (FDRT…DPNA) and 575 to 605 (AGNT…HLDT).

Belongs to the fem-1 family. Component of a CRL2 E3 ubiquitin-protein ligase complex, also named ECS (Elongin BC-CUL2/5-SOCS-box protein) complex.

Its pathway is protein modification; protein ubiquitination. Substrate-recognition component of a Cul2-RING (CRL2) E3 ubiquitin-protein ligase complex of the DesCEND (destruction via C-end degrons) pathway, which recognizes a C-degron located at the extreme C terminus of target proteins, leading to their ubiquitination and degradation. The C-degron recognized by the DesCEND pathway is usually a motif of less than ten residues and can be present in full-length proteins, truncated proteins or proteolytically cleaved forms. The sequence is that of Protein fem-1 homolog CG6966 from Drosophila melanogaster (Fruit fly).